A 119-amino-acid chain; its full sequence is MRALAFAAALAAFSATAALAAGALEAVQEAPAGSTEVKIAKMKFQTPEVRIKAGSAVTWTNTEALPHNVHFKSGPGVEKDVEGPMLRSNQTYSVKFNAPGTYDYICTPHPFMKGKVVVE.

Residues 1 to 20 (MRALAFAAALAAFSATAALA) form the signal peptide. Residues 21–119 (AGALEAVQEA…PFMKGKVVVE (99 aa)) form the Plastocyanin-like domain. 4 residues coordinate Cu cation: His67, Cys106, His109, and Met112.

It depends on Cu cation as a cofactor.

It localises to the periplasm. Its pathway is one-carbon metabolism; methylamine degradation. Its function is as follows. Primary acceptor of electrons from methylamine dehydrogenase. Passes those electrons on either a soluble cytochrome c or to pseudoazurin. This Methylorubrum extorquens (strain ATCC 14718 / DSM 1338 / JCM 2805 / NCIMB 9133 / AM1) (Methylobacterium extorquens) protein is Amicyanin-alpha (mauC).